The sequence spans 482 residues: UDP-N-acetylmuramate--L-alanine ligase (482 aa).

ATP is bound at residue 123–129 (GTHGKTT).

The protein belongs to the MurCDEF family.

The protein resides in the cytoplasm. It catalyses the reaction UDP-N-acetyl-alpha-D-muramate + L-alanine + ATP = UDP-N-acetyl-alpha-D-muramoyl-L-alanine + ADP + phosphate + H(+). It functions in the pathway cell wall biogenesis; peptidoglycan biosynthesis. Functionally, cell wall formation. This chain is UDP-N-acetylmuramate--L-alanine ligase, found in Pseudomonas putida (strain ATCC 700007 / DSM 6899 / JCM 31910 / BCRC 17059 / LMG 24140 / F1).